A 419-amino-acid chain; its full sequence is MTSQKIVKRLGKTSIVPPHGSDELKPLLLEGEALSQALHNAKNLPKITLSSRERGDLIMLGIGGFTPLDGFMNQADWQGVVDEMTLKTGANKGLFWPIPITLSTSKEQADSLAPGDEVALVAEDGEIMGVITVEETYTIDKAHECQQVFTTTEEEHPGVKQVMEQGEVNVAGAVKVFSQGEFPTLYPEIYKTPAETRKLFEEKNWQTIAAFQTRNPMHRSHEYLAKIAIEICDGVMIHSLLGALKPGDIPAEVRQEAIKTLIDNYFKKDTVIQAGYPLDMRYAGPREALLHALFRQNYGCSHLIVGRDHAGVGDYYGPFDAQAIFDEIDKDAMLTQPLKIDWTFWCNACQAMASTKTCPHDAEHHVKVSGTKLRKALSEDQEVPENFSRPEVLQILRNYYESIAKEDRAEVKLVGASAQ.

It belongs to the sulfate adenylyltransferase family.

It catalyses the reaction sulfate + ATP + H(+) = adenosine 5'-phosphosulfate + diphosphate. It functions in the pathway sulfur metabolism; hydrogen sulfide biosynthesis; sulfite from sulfate: step 1/3. The chain is Sulfate adenylyltransferase from Psychrobacter sp. (strain PRwf-1).